Reading from the N-terminus, the 263-residue chain is 4-hydroxy-tetrahydrodipicolinate reductase (263 aa).

Residues 7-12 (GASGRM) and aspartate 33 contribute to the NAD(+) site. An NADP(+)-binding site is contributed by arginine 34. NAD(+) is bound by residues 96–98 (GTT) and 120–123 (APNM). Histidine 153 serves as the catalytic Proton donor/acceptor. Residue histidine 154 participates in (S)-2,3,4,5-tetrahydrodipicolinate binding. Residue lysine 157 is the Proton donor of the active site. A (S)-2,3,4,5-tetrahydrodipicolinate-binding site is contributed by 163–164 (GT).

It belongs to the DapB family.

It is found in the cytoplasm. It catalyses the reaction (S)-2,3,4,5-tetrahydrodipicolinate + NAD(+) + H2O = (2S,4S)-4-hydroxy-2,3,4,5-tetrahydrodipicolinate + NADH + H(+). It carries out the reaction (S)-2,3,4,5-tetrahydrodipicolinate + NADP(+) + H2O = (2S,4S)-4-hydroxy-2,3,4,5-tetrahydrodipicolinate + NADPH + H(+). Its pathway is amino-acid biosynthesis; L-lysine biosynthesis via DAP pathway; (S)-tetrahydrodipicolinate from L-aspartate: step 4/4. Catalyzes the conversion of 4-hydroxy-tetrahydrodipicolinate (HTPA) to tetrahydrodipicolinate. This chain is 4-hydroxy-tetrahydrodipicolinate reductase, found in Ralstonia pickettii (strain 12J).